A 250-amino-acid polypeptide reads, in one-letter code: Myelin basic protein (250 aa).

Basic and acidic residues predominate over residues 1-28 (MGNHSGKRELSAEKASKDGEIHRGEAGK). Positions 1–150 (MGNHSGKREL…SQRSKYLATA (150 aa)) are disordered. G2 carries the N-acetylalanine modification. A phosphoserine mark is found at S31 and S40. The segment covering 95 to 113 (FSRDAPGREDNTFKDRPSE) has biased composition (basic and acidic residues). Phosphothreonine is present on S96. E113 is modified (phosphoserine). E122 carries the post-translational modification Phosphothreonine. The residue at position 125 (T125) is a Phosphotyrosine. Phosphoserine is present on residues A135, R139, S141, and S144. Residues Y146 and L147 each carry the phosphotyrosine modification. T149 is modified (phosphothreonine). S151 is subject to Phosphoserine. S151 is modified (phosphotyrosine). Phosphothreonine is present on T152. 2 positions are modified to citrulline: R157 and R163. A Phosphothreonine modification is found at T167. S172 is subject to Phosphoserine. Omega-N-methylarginine occurs at positions 175 and 181. A disordered region spans residues 175 to 250 (RFFSGDRGAP…SRSGSPMARR (76 aa)). A Phosphoserine modification is found at S188. At T197 the chain carries Phosphothreonine. Residues 197 to 206 (THYGSLPQKS) are compositionally biased toward polar residues. Phosphotyrosine is present on Y199. Position 206 is a phosphoserine (S206). A phosphothreonine mark is found at T211, T226, and T229. The residue at position 234 (Q234) is a Deamidated glutamine. R239 is subject to Citrulline. S241 carries the phosphoserine modification. S245 is modified (phosphoserine; by UHMK1). R250 is modified (citrulline).

Belongs to the myelin basic protein family. Homodimer. As in other animals, several charge isomers may be produced as a result of optional post-translational modifications, such as phosphorylation of serine or threonine residues, deamidation of glutamine or asparagine residues, citrullination and methylation of arginine residues. Post-translationally, methylated on arginine residues; decreases with the age of the animal, making MBP more cationic. In terms of processing, phosphorylated by TAOK2, VRK2, MAPK11, MAPK12, MAPK14 and MINK1. Proteolytically cleaved in B cell lysosomes by cathepsin CTSG which degrades the major immunogenic MBP epitope and prevents the activation of MBP-specific autoreactive T cells. In the embryo, isoform 1-isoform 3 are found in neurons within the central nervous system (primarily in pioneer neurons important in the formation of the cortex) and the peripheral nervous system. They are also expressed in the thymus, gut, lung and kidney. In the adult, isoform 1-isoform 3 are highly expressed in the brain (mainly in brain regions rich in oligodendrocytes) and spleen. Lower levels are seen in the heart, kidney and lung. Isoform 2 is also found in cells of the immune system. The isoforms missing the 134 first amino acids (isoform 4-isoform 13) are almost exclusively produced in the myelin-forming cells, the mature oligodendrocytes.

The protein resides in the myelin membrane. It localises to the cytoplasm. Its subcellular location is the nucleus. Its function is as follows. The classic group of MBP isoforms (isoform 4-isoform 13) are with PLP the most abundant protein components of the myelin membrane in the CNS. They have a role in both its formation and stabilization. The non-classic group of MBP isoforms (isoform 1-isoform 3/Golli-MBPs) may preferentially have a role in the early developing brain long before myelination, maybe as components of transcriptional complexes, and may also be involved in signaling pathways in T-cells and neural cells. Differential splicing events combined to optional post-translational modifications give a wide spectrum of isomers, with each of them potentially having a specialized function. The sequence is that of Myelin basic protein (Mbp) from Mus musculus (Mouse).